Reading from the N-terminus, the 289-residue chain is Nucleotide-binding protein COPRO5265_0725 (289 aa).

Position 9–16 (9–16) interacts with ATP; sequence GLSGAGKS. Position 59–62 (59–62) interacts with GTP; it reads DSRS.

It belongs to the RapZ-like family.

Functionally, displays ATPase and GTPase activities. The chain is Nucleotide-binding protein COPRO5265_0725 from Coprothermobacter proteolyticus (strain ATCC 35245 / DSM 5265 / OCM 4 / BT).